The following is a 308-amino-acid chain: Insoluble matrix shell protein 4 (308 aa).

Disordered regions lie at residues 1–21 (HGNGYNSNNGNGYNSNNGNGY), 47–104 (NTNS…PNAV), and 134–250 (YDSN…NTNS). Positions 47–99 (NTNSLNGNNNGNSNNNGNGNNNGNSNNNGNGNNNGNTNNGNSYDSNTNDDSNS) are enriched in low complexity.

As to expression, component of the acid-insoluble organic matrix of the calcified shell.

The protein resides in the secreted. The chain is Insoluble matrix shell protein 4 from Ruditapes philippinarum (Japanese carpet shell).